Reading from the N-terminus, the 271-residue chain is Very long chain fatty acid elongase 3 (271 aa).

Asparagine 6 carries an N-linked (GlcNAc...) asparagine glycan. 7 helical membrane passes run 30-50, 67-87, 116-136, 141-161, 165-187, 199-219, and 236-256; these read FLEE…LLIV, PLIL…LRMW, FWSF…AFII, PLIF…SFGY, VPSG…TYYT, LPMV…IFGI, and HFFW…HFFH.

The protein belongs to the ELO family. ELOVL3 subfamily. Interacts with TECR. Post-translationally, N-Glycosylated. In terms of tissue distribution, expressed in brown adipose tissue and liver. In the skin, strong expressed in the cells of the inner layer of the outer root sheath of the hair follicles and in the sebocytes of the sebaceous glands. Hardly detectable in the epidermis and not at all in fibroblasts.

The protein localises to the endoplasmic reticulum membrane. The catalysed reaction is a very-long-chain acyl-CoA + malonyl-CoA + H(+) = a very-long-chain 3-oxoacyl-CoA + CO2 + CoA. The enzyme catalyses eicosanoyl-CoA + malonyl-CoA + H(+) = 3-oxodocosanoyl-CoA + CO2 + CoA. It carries out the reaction hexadecanoyl-CoA + malonyl-CoA + H(+) = 3-oxooctadecanoyl-CoA + CO2 + CoA. It catalyses the reaction octadecanoyl-CoA + malonyl-CoA + H(+) = 3-oxoeicosanoyl-CoA + CO2 + CoA. The catalysed reaction is (9Z)-octadecenoyl-CoA + malonyl-CoA + H(+) = 3-oxo-(11Z)-eicosenoyl-CoA + CO2 + CoA. The enzyme catalyses (9Z,12Z)-octadecadienoyl-CoA + malonyl-CoA + H(+) = (11Z,14Z)-3-oxoicosa-11,14-dienoyl-CoA + CO2 + CoA. It carries out the reaction (9Z,12Z,15Z)-octadecatrienoyl-CoA + malonyl-CoA + H(+) = (11Z,14Z,17Z)-3-oxoeicosatrienoyl-CoA + CO2 + CoA. It catalyses the reaction docosanoyl-CoA + malonyl-CoA + H(+) = 3-oxotetracosanoyl-CoA + CO2 + CoA. The catalysed reaction is tetradecanoyl-CoA + malonyl-CoA + H(+) = 3-oxohexadecanoyl-CoA + CO2 + CoA. It participates in lipid metabolism; polyunsaturated fatty acid biosynthesis. Functionally, catalyzes the first and rate-limiting reaction of the four reactions that constitute the long-chain fatty acids elongation cycle. This endoplasmic reticulum-bound enzymatic process allows the addition of 2 carbons to the chain of long- and very long-chain fatty acids (VLCFAs) per cycle. Condensing enzyme that exhibits activity toward saturated and unsaturated acyl-CoA substrates with higher activity toward C18 acyl-CoAs, especially C18:0 acyl-CoAs. May participate in the production of saturated and monounsaturated VLCFAs of different chain lengths that are involved in multiple biological processes as precursors of membrane lipids and lipid mediators. Participates in the formation of certain VLCFA and triglycerides in certain cells of the hair follicles and the sebaceous glands, required for skin barrier function. Critical enzyme for lipid accumulation and metabolic activity in brown adipocytes during the early phase of the tissue recruitment. Plays a role in lipid storage and in resistance to diet-induced obesity. The sequence is that of Very long chain fatty acid elongase 3 from Mus musculus (Mouse).